We begin with the raw amino-acid sequence, 277 residues long: Large ribosomal subunit protein uL2 (277 aa).

Disordered stretches follow at residues 36 to 55 and 213 to 277; these read PLPK…RHHG and WKGI…RKKK.

The protein belongs to the universal ribosomal protein uL2 family. Part of the 50S ribosomal subunit. Forms a bridge to the 30S subunit in the 70S ribosome.

In terms of biological role, one of the primary rRNA binding proteins. Required for association of the 30S and 50S subunits to form the 70S ribosome, for tRNA binding and peptide bond formation. It has been suggested to have peptidyltransferase activity; this is somewhat controversial. Makes several contacts with the 16S rRNA in the 70S ribosome. This is Large ribosomal subunit protein uL2 from Staphylococcus aureus (strain bovine RF122 / ET3-1).